We begin with the raw amino-acid sequence, 98 residues long: Co-chaperonin GroES 1 (98 aa).

Belongs to the GroES chaperonin family. As to quaternary structure, heptamer of 7 subunits arranged in a ring. Interacts with the chaperonin GroEL.

Its subcellular location is the cytoplasm. Its function is as follows. Together with the chaperonin GroEL, plays an essential role in assisting protein folding. The GroEL-GroES system forms a nano-cage that allows encapsulation of the non-native substrate proteins and provides a physical environment optimized to promote and accelerate protein folding. GroES binds to the apical surface of the GroEL ring, thereby capping the opening of the GroEL channel. The protein is Co-chaperonin GroES 1 of Rhizobium meliloti (strain 1021) (Ensifer meliloti).